Here is a 122-residue protein sequence, read N- to C-terminus: Selenoprotein H (122 aa).

The residue at position 20 (Lys-20) is an N6-acetyllysine. The segment at residues 41-44 (CTSU) is a cross-link (cysteinyl-selenocysteine (Cys-Sec); redox-active). Sec-44 is a non-standard amino acid (selenocysteine).

The protein belongs to the SelWTH family.

Functionally, may be involved in a redox-related process. The protein is Selenoprotein H of Homo sapiens (Human).